An 831-amino-acid polypeptide reads, in one-letter code: Probable glucan 1,3-beta-glucosidase D (831 aa).

Composition is skewed to basic and acidic residues over residues 1-24 (MPSH…YREV), 44-56 (RRDD…RSHE), 79-93 (RSHD…RSRA), 102-115 (SRRD…EYRR), 137-151 (RDGQ…DREA), and 198-213 (QRER…MESK). Disordered stretches follow at residues 1-179 (MPSH…SGSH) and 192-241 (HYDE…GQSK). At 1 to 297 (MPSHSRSRDR…AQPPFWKRKK (297 aa)) the chain is on the cytoplasmic side. A helical; Signal-anchor for type II membrane protein transmembrane segment spans residues 298–318 (WWIVIGVLVVVLAIVIPVAVV). Topologically, residues 319-831 (MSKKHGHDDD…PSFGDLPEYY (513 aa)) are extracellular. N-linked (GlcNAc...) asparagine glycans are attached at residues Asn376, Asn381, Asn393, Asn410, Asn442, Asn546, and Asn558. Residue Glu597 is the Proton donor of the active site. 4 N-linked (GlcNAc...) asparagine glycosylation sites follow: Asn610, Asn636, Asn669, and Asn689. The active-site Nucleophile is the Glu702.

Belongs to the glycosyl hydrolase 5 (cellulase A) family.

Its subcellular location is the cell membrane. It carries out the reaction Successive hydrolysis of beta-D-glucose units from the non-reducing ends of (1-&gt;3)-beta-D-glucans, releasing alpha-glucose.. Its function is as follows. Glucosidase involved in the degradation of cellulosic biomass. Active on lichenan. This Aspergillus oryzae (strain ATCC 42149 / RIB 40) (Yellow koji mold) protein is Probable glucan 1,3-beta-glucosidase D (exgD).